The sequence spans 406 residues: MKKDIKKVVLAYSGGLDTSIILKWLQDEYKSEVVTFTADIGQGEELEPARKKALSLGVKEENIFIKDLKDEFVKDYVFAMFRANAIYEGEYLLGTSIARPLIAKALVEIANKTNADAISHGATGKGNDQVRFELGALALNPNLAIIAPWREWDLNSREKLLAYAQKHGIDIVKKADKSPYSMDANLLHISYEGLVLEDPAAKPEADMWRWVRDLKQTPNESEVIELEFSKGDLCAINGEKMSPAQLLAKLNELGAKHGIGRLDIVENRYVGMKSRGCYETPGGSILLKAHRAIESITLDREAAHLKDELMPKYASLIYNGYWFSPERLMLQALIDESQKHVNGKVKLELYKGNVMVIGRESANDSLFSEAYCTFEEDSVYDQKDAAGFIKLNALRFIIAGKNGRKF.

ATP-binding positions include 11-19 and alanine 38; that span reads AYSGGLDTS. L-citrulline-binding residues include tyrosine 91 and serine 96. An ATP-binding site is contributed by glycine 121. The L-aspartate site is built by threonine 123, asparagine 127, and aspartate 128. Asparagine 127 provides a ligand contact to L-citrulline. Positions 131, 181, 190, 266, and 278 each coordinate L-citrulline.

The protein belongs to the argininosuccinate synthase family. Type 1 subfamily. As to quaternary structure, homotetramer.

The protein localises to the cytoplasm. The enzyme catalyses L-citrulline + L-aspartate + ATP = 2-(N(omega)-L-arginino)succinate + AMP + diphosphate + H(+). It participates in amino-acid biosynthesis; L-arginine biosynthesis; L-arginine from L-ornithine and carbamoyl phosphate: step 2/3. This is Argininosuccinate synthase from Campylobacter lari (strain RM2100 / D67 / ATCC BAA-1060).